We begin with the raw amino-acid sequence, 1264 residues long: Valine--tRNA ligase (1264 aa).

The residue at position 2 (Ser-2) is an N-acetylserine. The GST C-terminal domain maps to 89 to 219 (GSRAAVLVQQ…YSGARSVTQQ (131 aa)). Residues 218–230 (QQPGSEITAPQKT) show a composition bias toward polar residues. The tract at residues 218 to 296 (QQPGSEITAP…GEKKDVSGTM (79 aa)) is disordered. Composition is skewed to basic and acidic residues over residues 234–248 (LKKE…EKFQ) and 260–275 (HGEK…KRDP). The 'HIGH' region signature appears at 344–354 (PNVTGSLHLGH). Phosphoserine is present on residues Ser-437 and Ser-527. Lys-645 is modified (N6-acetyllysine). The 'KMSKS' region motif lies at 862 to 866 (KMSKS). An ATP-binding site is contributed by Lys-865.

This sequence belongs to the class-I aminoacyl-tRNA synthetase family. In terms of assembly, forms high-molecular-mass aggregates with elongation factor 1.

It carries out the reaction tRNA(Val) + L-valine + ATP = L-valyl-tRNA(Val) + AMP + diphosphate. With respect to regulation, can be regulated by protein kinase C-dependent phosphorylation. The protein is Valine--tRNA ligase (Vars1) of Rattus norvegicus (Rat).